The following is a 157-amino-acid chain: Probable calcium-binding protein CML15 (157 aa).

EF-hand domains follow at residues 3 to 38, 39 to 74, 78 to 113, and 114 to 149; these read DQIR…LGLK, PSGD…DLNE, INSE…MGQP, and LTYK…SAVD. D16, D18, D20, S22, E27, D52, N54, N56, E63, D91, D93, N95, E102, D127, N129, D131, and E138 together coordinate Ca(2+).

Potential calcium sensor. The chain is Probable calcium-binding protein CML15 (CML15) from Arabidopsis thaliana (Mouse-ear cress).